The sequence spans 889 residues: Cytoplasmic aconitate hydratase (889 aa).

Substrate-binding positions include Gln-86 and Asp-205–His-207. Cys-437, Cys-503, and Cys-506 together coordinate [4Fe-4S] cluster. Substrate is bound by residues Arg-536, Arg-541, Arg-699, and Ser-779–Arg-780.

Belongs to the aconitase/IPM isomerase family. In terms of assembly, interacts (when associated with the 4Fe-4S) with FBXL5. Interacts with frataxin(81-210). Requires [4Fe-4S] cluster as cofactor.

It is found in the cytoplasm. Its subcellular location is the cytosol. It catalyses the reaction citrate = D-threo-isocitrate. In terms of biological role, bifunctional iron sensor that switches between 2 activities depending on iron availability. Iron deprivation, promotes its mRNA binding activity through which it regulates the expression of genes involved in iron uptake, sequestration and utilization. Binds to iron-responsive elements (IRES) in the untranslated region of target mRNAs preventing for instance the translation of ferritin and aminolevulinic acid synthase and stabilizing the transferrin receptor mRNA. Its function is as follows. Conversely, when cellular iron levels are high, binds a 4Fe-4S cluster which precludes RNA binding activity and promotes the aconitase activity, the isomerization of citrate to isocitrate via cis-aconitate. This is Cytoplasmic aconitate hydratase (Aco1) from Mus musculus (Mouse).